The primary structure comprises 450 residues: Tubulin alpha chain (450 aa).

Glutamine 11 contacts GTP. N6-acetyllysine is present on lysine 40. 7 residues coordinate GTP: glutamate 71, serine 140, glycine 144, threonine 145, threonine 179, asparagine 206, and asparagine 228. Residue glutamate 71 participates in Mg(2+) binding. Residue glutamate 254 is part of the active site.

Belongs to the tubulin family. As to quaternary structure, dimer of alpha and beta chains. A typical microtubule is a hollow water-filled tube with an outer diameter of 25 nm and an inner diameter of 15 nM. Alpha-beta heterodimers associate head-to-tail to form protofilaments running lengthwise along the microtubule wall with the beta-tubulin subunit facing the microtubule plus end conferring a structural polarity. Microtubules usually have 13 protofilaments but different protofilament numbers can be found in some organisms and specialized cells. Requires Mg(2+) as cofactor. In terms of processing, acetylation of alpha chains at Lys-40 stabilizes microtubules and affects affinity and processivity of microtubule motors. This modification has a role in multiple cellular functions, ranging from cell motility, cell cycle progression or cell differentiation to intracellular trafficking and signaling.

The protein resides in the cytoplasm. Its subcellular location is the cytoskeleton. It carries out the reaction GTP + H2O = GDP + phosphate + H(+). In terms of biological role, tubulin is the major constituent of microtubules, a cylinder consisting of laterally associated linear protofilaments composed of alpha- and beta-tubulin heterodimers. Microtubules grow by the addition of GTP-tubulin dimers to the microtubule end, where a stabilizing cap forms. Below the cap, tubulin dimers are in GDP-bound state, owing to GTPase activity of alpha-tubulin. The sequence is that of Tubulin alpha chain from Euplotes vannus (Marine ciliate).